The sequence spans 25 residues: Alpha-lytic protease (25 aa).

It belongs to the peptidase S1 family.

It carries out the reaction Preferential cleavage: Ala-|-Xaa, Val-|-Xaa in bacterial cell walls, elastin and other proteins.. The protein is Alpha-lytic protease of Achromobacter lyticus.